The chain runs to 626 residues: Chaperone protein DnaK (626 aa).

A Phosphothreonine; by autocatalysis modification is found at Thr197. 2 stretches are compositionally biased toward basic and acidic residues: residues 512 to 528 and 539 to 551; these read DAEA…EAVE and QTEK…GEKI. Disordered regions lie at residues 512–551 and 601–626; these read DAEA…GEKI and DQNA…AEVE.

It belongs to the heat shock protein 70 family.

Acts as a chaperone. This chain is Chaperone protein DnaK, found in Campylobacter fetus subsp. fetus (strain 82-40).